A 709-amino-acid chain; its full sequence is Ribosomal RNA large subunit methyltransferase K/L (709 aa).

The THUMP domain maps to 43 to 154 (LAYRITLWTR…NGVITIAMNF (112 aa)).

This sequence belongs to the methyltransferase superfamily. RlmKL family.

It localises to the cytoplasm. It carries out the reaction guanosine(2445) in 23S rRNA + S-adenosyl-L-methionine = N(2)-methylguanosine(2445) in 23S rRNA + S-adenosyl-L-homocysteine + H(+). The enzyme catalyses guanosine(2069) in 23S rRNA + S-adenosyl-L-methionine = N(2)-methylguanosine(2069) in 23S rRNA + S-adenosyl-L-homocysteine + H(+). Functionally, specifically methylates the guanine in position 2445 (m2G2445) and the guanine in position 2069 (m7G2069) of 23S rRNA. This is Ribosomal RNA large subunit methyltransferase K/L from Shewanella baltica (strain OS155 / ATCC BAA-1091).